We begin with the raw amino-acid sequence, 429 residues long: MKNTYNLRSIAAKAISQVLDQGQSLSAVLPELQKNISDKDRALLQELCFGTLRVLPQLEWCIQQLMARPMTGKQRVFHYLIMVGLYQLIYTRIPPHAALAETVEGATVLKRPQLKGLINGVLRQFQRQQVELLERAVNNDSHYLHPSWLLARIKQAYPAQWQQILDANNQRPPMWLRVNRQHHSRSEYLELLTQADINAEPHPIYRDAVRLITPCAVNHLPGFELGWVTVQDASAQGCVDLLDPQNGEQILDLCAAPGGKTTHILEAAPKAHVLAVDIDEQRLSRVKENLQRLQLQAVVRVGDGRAPDTWCGDQQFDRILLDAPCSATGVIRRHPDIKWLRRDRDISELAQLQSEIIEAIWPKLKHGGVLVYATCSILPEENQQQIAAFLQRHPEAQLTETGTTAAPGKQNLPHPEDGDGFFYAKIIKK.

S-adenosyl-L-methionine contacts are provided by residues 254 to 260 (CAAPGGK), Asp277, Asp303, and Asp322. The active-site Nucleophile is Cys375.

This sequence belongs to the class I-like SAM-binding methyltransferase superfamily. RsmB/NOP family.

It is found in the cytoplasm. It carries out the reaction cytidine(967) in 16S rRNA + S-adenosyl-L-methionine = 5-methylcytidine(967) in 16S rRNA + S-adenosyl-L-homocysteine + H(+). In terms of biological role, specifically methylates the cytosine at position 967 (m5C967) of 16S rRNA. The protein is Ribosomal RNA small subunit methyltransferase B of Yersinia pestis bv. Antiqua (strain Angola).